The chain runs to 349 residues: RxLR effector protein CRE15 (349 aa).

The first 33 residues, 1–33 (MITFKRLSSARWGALLTSIAVLFFLAITKGADA), serve as a signal peptide directing secretion. The RxLR-dEER motif lies at 46–62 (RRLRTTTADAYYASEDR).

Belongs to the RxLR effector family. Interacts directly with the potato ortholog of vascular highway 1 (VH1)-interacting kinase (VIK), encoding a predicted MEK kinase (MAP3K).

It is found in the secreted. The protein resides in the host cell membrane. Functionally, effector that promotes P.infestans virulence in Nicotiana benthamiana and potato. Attenuates cell death triggered by the pathogen-associated molecular pattern infestin 1 (INF1), indicating that the effector suppresses pattern-triggered immunity. However, it does not attenuate cell death triggered by a range of resistance proteins, suggesting that it specifically suppresses INF1-triggered cell death (ICD). Targets host MAP3K VIK in order to utilize or promote its ability to negatively regulate immunity. The sequence is that of RxLR effector protein CRE15 from Phytophthora infestans (strain T30-4) (Potato late blight agent).